The following is a 422-amino-acid chain: PHAF1 protein T01G9.2 (422 aa).

Belongs to the PHAF1 family.

Its subcellular location is the cytoplasm. It is found in the preautophagosomal structure. Its function is as follows. May play a regulatory role in autophagic activity. This Caenorhabditis elegans protein is PHAF1 protein T01G9.2.